Reading from the N-terminus, the 147-residue chain is D-aminoacyl-tRNA deacylase (147 aa).

A Gly-cisPro motif, important for rejection of L-amino acids motif is present at residues 136 to 137; that stretch reads GP.

This sequence belongs to the DTD family. In terms of assembly, homodimer.

Its subcellular location is the cytoplasm. The enzyme catalyses glycyl-tRNA(Ala) + H2O = tRNA(Ala) + glycine + H(+). The catalysed reaction is a D-aminoacyl-tRNA + H2O = a tRNA + a D-alpha-amino acid + H(+). An aminoacyl-tRNA editing enzyme that deacylates mischarged D-aminoacyl-tRNAs. Also deacylates mischarged glycyl-tRNA(Ala), protecting cells against glycine mischarging by AlaRS. Acts via tRNA-based rather than protein-based catalysis; rejects L-amino acids rather than detecting D-amino acids in the active site. By recycling D-aminoacyl-tRNA to D-amino acids and free tRNA molecules, this enzyme counteracts the toxicity associated with the formation of D-aminoacyl-tRNA entities in vivo and helps enforce protein L-homochirality. In Streptococcus dysgalactiae subsp. equisimilis (Streptococcus equisimilis), this protein is D-aminoacyl-tRNA deacylase.